Consider the following 76-residue polypeptide: Envelope small membrane protein (76 aa).

At 1-14 the chain is on the virion surface side; the sequence is MLQLVNDNGVVVNA. Residues 15–35 traverse the membrane as a helical segment; sequence ILWLFVLFFVLVISITFVQLI. Residues 36-76 are Intravirion-facing; sequence NLCFTCHRLCNNVVYKPVGKVYGVYKSYMRIQPLTSDIIQV.

The protein belongs to the alphacoronaviruses E protein family. As to quaternary structure, homopentamer. Interacts with membrane protein M in the budding compartment of the host cell, which is located between endoplasmic reticulum and the Golgi complex. Interacts with Nucleoprotein.

It localises to the host Golgi apparatus membrane. In terms of biological role, plays a central role in virus morphogenesis and assembly. Acts as a viroporin and self-assembles in host membranes forming pentameric protein-lipid pores that allow ion transport. Also plays a role in the induction of apoptosis. The polypeptide is Envelope small membrane protein (Scotophilus kuhlii (Lesser asiatic yellow bat)).